Here is a 385-residue protein sequence, read N- to C-terminus: 3-hydroxyisobutyryl-CoA hydrolase, mitochondrial (385 aa).

Positions 120, 145, 168, and 176 each coordinate substrate.

It belongs to the enoyl-CoA hydratase/isomerase family.

It localises to the mitochondrion. It catalyses the reaction 3-hydroxy-2-methylpropanoyl-CoA + H2O = 3-hydroxy-2-methylpropanoate + CoA + H(+). The protein operates within amino-acid degradation; L-valine degradation. In terms of biological role, hydrolyzes 3-hydroxyisobutyryl-CoA (HIBYL-CoA), a saline catabolite. Has high activity toward isobutyryl-CoA. Could be an isobutyryl-CoA dehydrogenase that functions in valine catabolism. Also hydrolyzes 3-hydroxypropanoyl-CoA. The chain is 3-hydroxyisobutyryl-CoA hydrolase, mitochondrial (HIBCH) from Gallus gallus (Chicken).